A 102-amino-acid chain; its full sequence is MFAIIKNGSKQFRVFEGQEIFVEKISLMEKSNYEFKEILAIGGKNNILGQPFVSGAKVQAQIIKHGRAKKIIVFKYKSKKKYRCKQGHRQNYTKLLITKIIA.

It belongs to the bacterial ribosomal protein bL21 family. In terms of assembly, part of the 50S ribosomal subunit. Contacts protein L20.

In terms of biological role, this protein binds to 23S rRNA in the presence of protein L20. The chain is Large ribosomal subunit protein bL21 from Phytoplasma mali (strain AT).